The sequence spans 491 residues: UDP-N-acetylmuramate--L-alanine ligase (491 aa).

Position 126–132 (126–132) interacts with ATP; the sequence is GTHGKTT.

Belongs to the MurCDEF family.

It localises to the cytoplasm. The catalysed reaction is UDP-N-acetyl-alpha-D-muramate + L-alanine + ATP = UDP-N-acetyl-alpha-D-muramoyl-L-alanine + ADP + phosphate + H(+). It participates in cell wall biogenesis; peptidoglycan biosynthesis. Cell wall formation. The polypeptide is UDP-N-acetylmuramate--L-alanine ligase (Yersinia pestis (strain Pestoides F)).